The chain runs to 994 residues: Seizure protein 6 homolog (994 aa).

The N-terminal stretch at 1–19 (MRPVALLLLPSLLALLAHG) is a signal peptide. Residues 20–925 (LSLEAPTVGK…AASSTLDAAH (906 aa)) lie on the Extracellular side of the membrane. The tract at residues 28–50 (GKGQAPGIEETDGELTAAPTPEQ) is disordered. O-glycosylated at two sites stretches follow at residues 38–47 (TDGELTAAPT) and 59–63 (TTAPT). 3 disordered regions span residues 88-146 (LRPA…ESES), 171-191 (IAST…PGDM), and 241-261 (PGPC…PTDL). The segment covering 93–107 (PFQPDPPAPFTPSPL) has biased composition (pro residues). 2 stretches are compositionally biased toward polar residues: residues 112–123 (NQDSRPVFTSPT) and 172–185 (ASTT…TPTQ). Asn289 carries an N-linked (GlcNAc...) asparagine glycan. The Sushi 1 domain maps to 355–414 (LSCHFPRRPAYGDVTVTSLHPGGSARFHCATGYQLKGARHLTCLNATQPFWDSKEPVCIA). Disulfide bonds link Cys357–Cys397, Cys383–Cys412, Cys416–Cys443, Cys532–Cys574, Cys559–Cys589, Cys593–Cys619, Cys710–Cys752, Cys738–Cys765, Cys771–Cys813, Cys799–Cys830, Cys838–Cys880, and Cys866–Cys895. N-linked (GlcNAc...) asparagine glycosylation is found at Asn399, Asn436, and Asn541. In terms of domain architecture, CUB 1 spans 416–527 (CGGVIRNATT…AGMALRYEAF (112 aa)). Residues 530–591 (GHCYEPFVKY…WNETEPACRA (62 aa)) enclose the Sushi 2 domain. The CUB 2 domain maps to 593–704 (CSGEITDSAG…QGFVIHFFEV (112 aa)). Sushi domains are found at residues 708–767 (DTCP…SCQR), 769–832 (TSCH…KCLL), and 836–897 (KPCH…ICRA). A helical transmembrane segment spans residues 926–946 (IAAAIFLPLVAMVLLVGGVYF). Residues 947–994 (YFSRLQGKSSLQLPRPRPRPYNRITIESAFDNPTYETGSLSFAGDERI) lie on the Cytoplasmic side of the membrane.

The protein belongs to the SEZ6 family. Glycosylated.

The protein localises to the cell membrane. Functionally, may play a role in cell-cell recognition and in neuronal membrane signaling. Seems to be important for the achievement of the necessary balance between dendrite elongation and branching during the elaboration of a complex dendritic arbor. Involved in the development of appropriate excitatory synaptic connectivity. The sequence is that of Seizure protein 6 homolog (SEZ6) from Homo sapiens (Human).